The chain runs to 368 residues: Cytochrome b (368 aa).

A run of 4 helical transmembrane segments spans residues 32 to 52 (FGFLVAMTFVLQIITGITLAF), 76 to 98 (WEFRMLHATTASFVFLCILIHMT), 112 to 132 (AWMSGLVLYLLTIATAFLGYV), and 174 to 194 (FFVLHFILPFIGCIIIVLHIF). Residues His-82 and His-96 each contribute to the heme b site. Residues His-178 and His-192 each coordinate heme b. Position 197 (His-197) interacts with a ubiquinone. The next 4 membrane-spanning stretches (helical) occupy residues 219–239 (MLMTDAKCLSYLIGLIFLQAA), 285–305 (GLLVFMSSLINLGLLSEIRAL), 323–343 (GWVIIWVYSMIFLIIIGSAIP), and 347–367 (YILYGRLATILYLTTGLVLCL).

This sequence belongs to the cytochrome b family. The main subunits of complex b-c1 are: cytochrome b, cytochrome c1 and the Rieske protein. The cofactor is heme b.

It is found in the mitochondrion inner membrane. Component of the ubiquinol-cytochrome c reductase complex (complex III or cytochrome b-c1 complex) that is part of the mitochondrial respiratory chain. The b-c1 complex mediates electron transfer from ubiquinol to cytochrome c. Contributes to the generation of a proton gradient across the mitochondrial membrane that is then used for ATP synthesis. The protein is Cytochrome b (MT-CYB) of Toxoplasma gondii.